The primary structure comprises 289 residues: 4-hydroxy-tetrahydrodipicolinate synthase (289 aa).

Position 43 (Thr43) interacts with pyruvate. The active-site Proton donor/acceptor is the Tyr131. The Schiff-base intermediate with substrate role is filled by Lys160. Val200 lines the pyruvate pocket.

It belongs to the DapA family. As to quaternary structure, homotetramer; dimer of dimers.

The protein localises to the cytoplasm. The catalysed reaction is L-aspartate 4-semialdehyde + pyruvate = (2S,4S)-4-hydroxy-2,3,4,5-tetrahydrodipicolinate + H2O + H(+). Its pathway is amino-acid biosynthesis; L-lysine biosynthesis via DAP pathway; (S)-tetrahydrodipicolinate from L-aspartate: step 3/4. In terms of biological role, catalyzes the condensation of (S)-aspartate-beta-semialdehyde [(S)-ASA] and pyruvate to 4-hydroxy-tetrahydrodipicolinate (HTPA). This is 4-hydroxy-tetrahydrodipicolinate synthase from Methanococcus maripaludis (strain C5 / ATCC BAA-1333).